The primary structure comprises 292 residues: N-acetylneuraminate lyase (292 aa).

Ser47 and Thr48 together coordinate aceneuramate. The active-site Proton donor is Tyr136. Lys164 functions as the Schiff-base intermediate with substrate in the catalytic mechanism. Aceneuramate is bound by residues Thr166, Gly188, Asp190, Glu191, and Ser207.

This sequence belongs to the DapA family. NanA subfamily. In terms of assembly, homotetramer.

It localises to the cytoplasm. The enzyme catalyses aceneuramate = aldehydo-N-acetyl-D-mannosamine + pyruvate. It participates in amino-sugar metabolism; N-acetylneuraminate degradation; D-fructose 6-phosphate from N-acetylneuraminate: step 1/5. Its function is as follows. Catalyzes the reversible aldol cleavage of N-acetylneuraminic acid (sialic acid; Neu5Ac) to form pyruvate and N-acetylmannosamine (ManNAc) via a Schiff base intermediate. The sequence is that of N-acetylneuraminate lyase from Actinobacillus pleuropneumoniae serotype 3 (strain JL03).